Reading from the N-terminus, the 1226-residue chain is Probable phosphorylase b kinase regulatory subunit alpha (1226 aa).

Residues 666-688 (NEKITTPRGPRTLRRGESVKDRS) are disordered. Residues 679–688 (RRGESVKDRS) show a composition bias toward basic and acidic residues.

This sequence belongs to the phosphorylase b kinase regulatory chain family.

It functions in the pathway glycan biosynthesis; glycogen metabolism. Its function is as follows. Phosphorylase b kinase catalyzes the phosphorylation of serine in certain substrates, including troponin I. The alpha chain may bind calmodulin. In Caenorhabditis elegans, this protein is Probable phosphorylase b kinase regulatory subunit alpha.